The following is a 119-amino-acid chain: Large ribosomal subunit protein bL20 (119 aa).

It belongs to the bacterial ribosomal protein bL20 family.

In terms of biological role, binds directly to 23S ribosomal RNA and is necessary for the in vitro assembly process of the 50S ribosomal subunit. It is not involved in the protein synthesizing functions of that subunit. The sequence is that of Large ribosomal subunit protein bL20 from Streptococcus suis (strain 98HAH33).